Here is a 253-residue protein sequence, read N- to C-terminus: Aminoglycoside nucleotidyltransferase (4') (253 aa).

As to quaternary structure, homodimer.

The enzyme catalyses kanamycin A + ATP = 4'-adenylylkanamycin A + diphosphate. It catalyses the reaction amikacin + ATP = 4'-adenylylamikacin + diphosphate. It carries out the reaction neomycin B + ATP = 4'-adenylylneomycin B + diphosphate. The catalysed reaction is paromomycin + ATP = 4'-adenylylparomomycin + diphosphate. The enzyme catalyses ribostamycin + ATP = 4'-adenylylribostamycin + diphosphate. It catalyses the reaction tobramycin + ATP = 4'-adenylyltobramycin + diphosphate. It carries out the reaction kanamycin A + CTP = 4'-cytidylylkanamycin A + diphosphate. The catalysed reaction is kanamycin A + GTP = 4'-guanylylkanamycin A + diphosphate. The enzyme catalyses kanamycin A + ITP = 4'-inosinylylkanamycin A + diphosphate. It catalyses the reaction dTTP + kanamycin A = 4'-thymidylylkanamycin A + diphosphate. It carries out the reaction kanamycin A + UTP = 4'-uridylylkanamycin A + diphosphate. The catalysed reaction is kanamycin A + dATP = 4'-(2'-deoxyadenylyl)kanamycin A + diphosphate. The enzyme catalyses kanamycin A + dCTP = 4'-(2'-deoxycytidylyl)kanamycin A + diphosphate. It catalyses the reaction kanamycin A + dGTP = 4'-(2'-deoxyguanylyl)kanamycin A + diphosphate. It carries out the reaction dUTP + kanamycin A = 4'-(2'-deoxyuridylyl)kanamycin A + diphosphate. The catalysed reaction is amikacin + GTP = 4'-guanylylamikacin + diphosphate. The enzyme catalyses amikacin + ITP = 4'-inosinylylamikacin + diphosphate. It catalyses the reaction amikacin + CTP = 4'-cytidylylamikacin + diphosphate. It carries out the reaction amikacin + UTP = 4'-uridylylamikacin + diphosphate. The catalysed reaction is amikacin + dTTP = 4'-thymidylylamikacin + diphosphate. In terms of biological role, inactivates aminoglycoside antibiotics such as kanamycin by catalyzing the transfer of a nucleotidyl group from nucleoside triphosphates such as (d)ATP to the 4'-hydroxyl group of the aminoglycoside. The polypeptide is Aminoglycoside nucleotidyltransferase (4') (Bacillus sp).